Reading from the N-terminus, the 368-residue chain is Glucose 1-dehydrogenase 2 (368 aa).

C41 lines the Zn(2+) pocket. Residue T43 participates in substrate binding. H68 and E69 together coordinate Zn(2+). Position 91 (N91) interacts with substrate. 5 residues coordinate Zn(2+): C95, C98, C101, C109, and Q152. Substrate contacts are provided by Q152 and D156. Residues 213–215, 279–281, 307–309, and K356 each bind NADP(+); these read NRR, FGF, and LDN. N309 is a substrate binding site.

It belongs to the zinc-containing alcohol dehydrogenase family. Glucose 1-dehydrogenase subfamily. It depends on Zn(2+) as a cofactor.

The enzyme catalyses D-glucose + NAD(+) = D-glucono-1,5-lactone + NADH + H(+). It catalyses the reaction D-glucose + NADP(+) = D-glucono-1,5-lactone + NADPH + H(+). Catalyzes the NAD(P)(+)-dependent oxidation of D-glucose to D-gluconate via gluconolactone. Can utilize both NAD(+) and NADP(+) as electron acceptor. Is involved in the degradation of glucose through a non-phosphorylative variant of the Entner-Doudoroff pathway. The sequence is that of Glucose 1-dehydrogenase 2 from Saccharolobus solfataricus (strain ATCC 35092 / DSM 1617 / JCM 11322 / P2) (Sulfolobus solfataricus).